We begin with the raw amino-acid sequence, 162 residues long: Ubiquitin-fold modifier-conjugating enzyme 1 (162 aa).

The active-site Glycyl thioester intermediate is the Cys115.

The protein belongs to the ubiquitin-conjugating enzyme family. UFC1 subfamily. In terms of assembly, interacts with uba-5. As to expression, expressed in the intestine.

E2-like enzyme which forms an intermediate with ufm-1. The intermediate is formed via a thioester linkage. This chain is Ubiquitin-fold modifier-conjugating enzyme 1, found in Caenorhabditis elegans.